Here is a 573-residue protein sequence, read N- to C-terminus: MRLTVGQVHRHVLALASSRSCFVLGDHLPFRMLSLPRVVRFHQTAWHDIQTVEDKSGPLTLASLEVQNKVEYVKKERATRTGGIKPSSRASALNMKPKVSSFNAKPVKSALPKSAVLKKTLKIDESLFSAKSFEELGLPPLLIDRLNKEGLTAPTEVQSAAIPIISQKHDAVIQSYTGSGKTLAYLLPILSEIGPLKRPTEQDSSDKRSGVEAVIVAPSRELGMQIVREVEKILGPNDKRLVQQLVGGANRSRQEEALKKNKPIIVVGTPGRISEISAAGKLHTHSCRFLVLDEVDQLLSFNYREDMHRILEHVGRKSGTSSRDILGPLARRSERQTILVSATIPFSVIRAARSWGHDPVLVRAMSVVPLESITVPRPVLSQPDANSNSPSNSVNQAAVDSLPPSLEHYYCTSKAQHKVDTLRRCIHALEAQTVIAFMNNTKPLKDVVFKLEARGMKATELHGDLGKLARSTVLKKFKDGEFRVLVTNELSARGLDVPECDLVINLDLPTDSTHYAHRAGRTGRLGRKGTVVTICEETETFVVRKMRKQLAVPIKPCEFTEGKLLVHKEEDVE.

Positions 131–159 (KSFEELGLPPLLIDRLNKEGLTAPTEVQS) match the Q motif motif. One can recognise a Helicase ATP-binding domain in the interval 162-362 (IPIISQKHDA…RSWGHDPVLV (201 aa)). 175–182 (SYTGSGKT) lines the ATP pocket. The DEAD box signature appears at 293 to 296 (DEVD). The region spanning 421–565 (TLRRCIHALE…PCEFTEGKLL (145 aa)) is the Helicase C-terminal domain.

It belongs to the DEAD box helicase family.

It catalyses the reaction ATP + H2O = ADP + phosphate + H(+). In Oryza sativa subsp. japonica (Rice), this protein is DEAD-box ATP-dependent RNA helicase 47A.